The chain runs to 415 residues: NEDD8-specific protease 2 (415 aa).

The segment at 1–42 (MRSNSIFTKEIDSEAVKKSSNLRPPSTGSSNSNGSDTASPKK) is disordered. Positions 26-38 (STGSSNSNGSDTA) are enriched in low complexity. At Ser-35 the chain carries Phosphoserine. Active-site residues include His-171, Asp-188, and Cys-229. Positions 320–415 (AVTSDSAQPH…QHTQQSIEIH (96 aa)) are disordered. Polar residues-rich tracts occupy residues 335 to 368 (MPSSQPQSRSESLPLTHPNSEPNPKLDSQPNSSP), 379 to 390 (TASTSVLPTSIL), and 405 to 415 (IQHTQQSIEIH). Position 367 is a phosphoserine (Ser-367).

The protein belongs to the peptidase C48 family.

The protein localises to the cytoplasm. It localises to the nucleus. Protease that catalyzes two essential functions in the NEDD8 pathway: processing of full-length NEDD8 to its mature form and deconjugation of NEDD8 from targeted proteins such as the pcu1, pcu2 and pcu4 cullins and other proteins. Has a role in meiosis. The chain is NEDD8-specific protease 2 (nep2) from Schizosaccharomyces pombe (strain 972 / ATCC 24843) (Fission yeast).